Here is a 149-residue protein sequence, read N- to C-terminus: Large ribosomal subunit protein uL15A (149 aa).

Residues 21-40 (RIGKHRKQRGGRGNAGGQHH) form a disordered region.

The protein belongs to the universal ribosomal protein uL15 family. As to quaternary structure, component of the large ribosomal subunit.

The protein localises to the cytoplasm. Its subcellular location is the cytosol. It is found in the endoplasmic reticulum. Component of the large ribosomal subunit. The ribosome is a large ribonucleoprotein complex responsible for the synthesis of proteins in the cell. The polypeptide is Large ribosomal subunit protein uL15A (rpl27a-1) (Entamoeba histolytica (strain ATCC 30459 / HM-1:IMSS / ABRM)).